Reading from the N-terminus, the 439-residue chain is Trigger factor (439 aa).

The PPIase FKBP-type domain maps to 175-260 (SDKLVIDYQN…VKSVYVMKGM (86 aa)).

Belongs to the FKBP-type PPIase family. Tig subfamily.

The protein resides in the cytoplasm. The enzyme catalyses [protein]-peptidylproline (omega=180) = [protein]-peptidylproline (omega=0). Its function is as follows. Involved in protein export. Acts as a chaperone by maintaining the newly synthesized protein in an open conformation. Functions as a peptidyl-prolyl cis-trans isomerase. The protein is Trigger factor of Ehrlichia chaffeensis (strain ATCC CRL-10679 / Arkansas).